Consider the following 78-residue polypeptide: Acyl carrier protein (78 aa).

The Carrier domain occupies 2 to 77 (STIEERVKKI…EAIDYINAHA (76 aa)). Ser-37 carries the O-(pantetheine 4'-phosphoryl)serine modification.

The protein belongs to the acyl carrier protein (ACP) family. In terms of processing, 4'-phosphopantetheine is transferred from CoA to a specific serine of apo-ACP by AcpS. This modification is essential for activity because fatty acids are bound in thioester linkage to the sulfhydryl of the prosthetic group.

It is found in the cytoplasm. It functions in the pathway lipid metabolism; fatty acid biosynthesis. In terms of biological role, carrier of the growing fatty acid chain in fatty acid biosynthesis. The protein is Acyl carrier protein of Stutzerimonas stutzeri (strain A1501) (Pseudomonas stutzeri).